The sequence spans 158 residues: MSNEFTHINADGNAHMVDVTEKAVTEREARAEAFIEMAPATLEMIMSGSHHKGDVFATARIAGIQAAKKTSDLIPLCHPLMLTKVEVELEAQPEHSRVRITSLCKLSGKTGVEMEALTAASVAALTIYDMCKAVQKDMVISQTRLLEKRGGKSGHFKV.

Residues 76–78 and 114–115 contribute to the substrate site; these read LCH and ME. Residue D129 is part of the active site.

It belongs to the MoaC family. In terms of assembly, homohexamer; trimer of dimers.

The catalysed reaction is (8S)-3',8-cyclo-7,8-dihydroguanosine 5'-triphosphate = cyclic pyranopterin phosphate + diphosphate. The protein operates within cofactor biosynthesis; molybdopterin biosynthesis. Catalyzes the conversion of (8S)-3',8-cyclo-7,8-dihydroguanosine 5'-triphosphate to cyclic pyranopterin monophosphate (cPMP). This chain is Cyclic pyranopterin monophosphate synthase, found in Shewanella woodyi (strain ATCC 51908 / MS32).